We begin with the raw amino-acid sequence, 369 residues long: 2-aminoethylphosphonate--pyruvate transaminase (369 aa).

N6-(pyridoxal phosphate)lysine is present on Lys-193.

It belongs to the class-V pyridoxal-phosphate-dependent aminotransferase family. PhnW subfamily. In terms of assembly, homodimer. The cofactor is pyridoxal 5'-phosphate.

It catalyses the reaction (2-aminoethyl)phosphonate + pyruvate = phosphonoacetaldehyde + L-alanine. Its function is as follows. Involved in phosphonate degradation. The sequence is that of 2-aminoethylphosphonate--pyruvate transaminase from Burkholderia thailandensis (strain ATCC 700388 / DSM 13276 / CCUG 48851 / CIP 106301 / E264).